The following is a 182-amino-acid chain: Ribosome maturation factor RimM (182 aa).

Residues 103–182 (EDDYYWKDLM…RVEVDWDPGF (80 aa)) enclose the PRC barrel domain.

Belongs to the RimM family. As to quaternary structure, binds ribosomal protein uS19.

It is found in the cytoplasm. In terms of biological role, an accessory protein needed during the final step in the assembly of 30S ribosomal subunit, possibly for assembly of the head region. Essential for efficient processing of 16S rRNA. May be needed both before and after RbfA during the maturation of 16S rRNA. It has affinity for free ribosomal 30S subunits but not for 70S ribosomes. The protein is Ribosome maturation factor RimM of Yersinia enterocolitica serotype O:8 / biotype 1B (strain NCTC 13174 / 8081).